The primary structure comprises 155 residues: Large ribosomal subunit protein eL24B (155 aa).

Phosphoserine is present on S7. The segment at 66-155 is disordered; that stretch reads EVAKKRSRKT…AFQKVAATSR (90 aa). The span at 89-129 shows a compositional bias: basic and acidic residues; sequence LIKERRSLKPEVRKANREEKLKANKEKKRAEKAARKAEKAK.

Belongs to the eukaryotic ribosomal protein eL24 family. In terms of assembly, component of the large ribosomal subunit (LSU). Mature yeast ribosomes consist of a small (40S) and a large (60S) subunit. The 40S small subunit contains 1 molecule of ribosomal RNA (18S rRNA) and 33 different proteins (encoded by 57 genes). The large 60S subunit contains 3 rRNA molecules (25S, 5.8S and 5S rRNA) and 46 different proteins (encoded by 81 genes).

It localises to the cytoplasm. Component of the ribosome, a large ribonucleoprotein complex responsible for the synthesis of proteins in the cell. The small ribosomal subunit (SSU) binds messenger RNAs (mRNAs) and translates the encoded message by selecting cognate aminoacyl-transfer RNA (tRNA) molecules. The large subunit (LSU) contains the ribosomal catalytic site termed the peptidyl transferase center (PTC), which catalyzes the formation of peptide bonds, thereby polymerizing the amino acids delivered by tRNAs into a polypeptide chain. The nascent polypeptides leave the ribosome through a tunnel in the LSU and interact with protein factors that function in enzymatic processing, targeting, and the membrane insertion of nascent chains at the exit of the ribosomal tunnel. This is Large ribosomal subunit protein eL24B from Saccharomyces cerevisiae (strain ATCC 204508 / S288c) (Baker's yeast).